Here is a 744-residue protein sequence, read N- to C-terminus: Cytoskeleton-associated protein 2-like (744 aa).

5 disordered regions span residues 35 to 56, 76 to 169, 182 to 216, 317 to 337, and 428 to 452; these read YLKAKNNCPNPPHSKSTIGPKK, LQSR…THVE, KENLPQDLPNSERKPNPESWTINKPQTNQTKSSLA, TVTEQKVKHSKPSTHPSVLQG, and NKTAPRTQAGGPTISGRGVPNGAQT. 3 stretches are compositionally biased toward polar residues: residues 76 to 86, 102 to 129, and 137 to 154; these read LQSRPANITRS, SESVSSNPNGKPPGNSQQLRGFGSSTDG, and GSLNVQKLKTTKQQVTDQ. Lys-195 participates in a covalent cross-link: Glycyl lysine isopeptide (Lys-Gly) (interchain with G-Cter in SUMO1); alternate. Residue Lys-195 forms a Glycyl lysine isopeptide (Lys-Gly) (interchain with G-Cter in SUMO2); alternate linkage. Residues 199–216 are compositionally biased toward polar residues; the sequence is ESWTINKPQTNQTKSSLA. Phosphoserine is present on Ser-744.

Belongs to the CKAP2 family. Ubiquitinated by the anaphase promoting complex/cyclosome (APC/C).

Its subcellular location is the cytoplasm. It is found in the cytoskeleton. It localises to the spindle pole. Microtubule-associated protein required for mitotic spindle formation and cell-cycle progression in neural progenitor cells. In Bos taurus (Bovine), this protein is Cytoskeleton-associated protein 2-like (CKAP2L).